Here is a 137-residue protein sequence, read N- to C-terminus: Acidic phospholipase A2 Vur-PL3 (137 aa).

Positions 1-16 (MRTLWIVAVCLIGVEG) are cleaved as a signal peptide. Disulfide bonds link Cys-42–Cys-131, Cys-44–Cys-60, Cys-59–Cys-111, Cys-65–Cys-137, Cys-66–Cys-104, Cys-73–Cys-97, and Cys-91–Cys-102. Tyr-43, Gly-45, and Gly-47 together coordinate Ca(2+). His-63 is a catalytic residue. Residue Asp-64 participates in Ca(2+) binding. Asp-105 is an active-site residue.

Ca(2+) serves as cofactor. Expressed by the venom gland.

It localises to the secreted. The catalysed reaction is a 1,2-diacyl-sn-glycero-3-phosphocholine + H2O = a 1-acyl-sn-glycero-3-phosphocholine + a fatty acid + H(+). The sequence is that of Acidic phospholipase A2 Vur-PL3 from Vipera renardi (Steppe viper).